The sequence spans 354 residues: MHTDISSFDPALAARLRAAVDSKTKPLGALGRLESLAVQIGLIQDTEAPVLIRPAMVVFAADHGVAQAGVSAYPQAVTAQMVLNFIAGGAAVNVFCRQHGFALEIVNAGVAMPLWSLGVPGLIDAPIGAGTRNFAHEPAMTAAERDRAMALGAQRVAAHAELGSNVIALGEMGIGNTASAACLMARLCDLPLAQCVGRGAGLDDAGLARKCAVLEAALAAHADARAPLDALACFGGFEIAAMAGAMLEAARRRMVILVDGFIASAAALVATRVAPEVQRFCVFAHLSDEHGHRALLAALGAEPLLQLSMRLGEGSGAVLAYPLVVSAVAFLREMATFASAGVSEQAPPALDPAA.

The Proton acceptor role is filled by E313.

Belongs to the CobT family.

It catalyses the reaction 5,6-dimethylbenzimidazole + nicotinate beta-D-ribonucleotide = alpha-ribazole 5'-phosphate + nicotinate + H(+). It functions in the pathway nucleoside biosynthesis; alpha-ribazole biosynthesis; alpha-ribazole from 5,6-dimethylbenzimidazole: step 1/2. Its function is as follows. Catalyzes the synthesis of alpha-ribazole-5'-phosphate from nicotinate mononucleotide (NAMN) and 5,6-dimethylbenzimidazole (DMB). This chain is Nicotinate-nucleotide--dimethylbenzimidazole phosphoribosyltransferase, found in Ralstonia nicotianae (strain ATCC BAA-1114 / GMI1000) (Ralstonia solanacearum).